A 2898-amino-acid chain; its full sequence is Papilin (2898 aa).

Residues Met-1–Ser-26 form the signal peptide. Residues Leu-43 to Ser-67 form a disordered region. A TSP type-1 1 domain is found at Pro-57 to Pro-111. Disulfide bonds link Cys-69–Cys-105, Cys-73–Cys-110, and Cys-84–Cys-95. Residues Asn-258 and Asn-319 are each glycosylated (N-linked (GlcNAc...) asparagine). One can recognise a TSP type-1 2 domain in the interval Asp-338–Ala-397. An N-linked (GlcNAc...) asparagine glycan is attached at Asn-419. TSP type-1 domains follow at residues Asn-461–Glu-521, Gly-522–Lys-575, Cys-576–Glu-633, and Cys-639–Thr-694. Disulfide bonds link Cys-462-Cys-504, Cys-473-Cys-515, and Cys-477-Cys-520. Asn-669 carries N-linked (GlcNAc...) asparagine glycosylation. Disordered stretches follow at residues Leu-699 to Ser-1252 and Gly-1323 to Lys-1367. Acidic residues-rich tracts occupy residues Ile-708–Ile-720 and Leu-727–Asp-738. Over residues Ser-768–Ile-788 the composition is skewed to polar residues. The span at Glu-801 to Ser-879 shows a compositional bias: low complexity. N-linked (GlcNAc...) asparagine glycans are attached at residues Asn-889, Asn-914, Asn-917, Asn-950, and Asn-1064. Low complexity predominate over residues Ala-890 to Gly-1053. Residues Asn-1064–Gly-1073 are compositionally biased toward polar residues. Composition is skewed to low complexity over residues Glu-1076–Thr-1091 and Ser-1104–Thr-1215. Basic residues predominate over residues Ser-1237 to Thr-1248. The span at Pro-1330 to Glu-1351 shows a compositional bias: low complexity. N-linked (GlcNAc...) asparagine glycosylation is found at Asn-1489 and Asn-1623. Disulfide bonds link Cys-1612/Cys-1662, Cys-1621/Cys-1645, Cys-1637/Cys-1658, Cys-1671/Cys-1721, Cys-1680/Cys-1704, Cys-1696/Cys-1717, Cys-1730/Cys-1780, Cys-1739/Cys-1763, Cys-1755/Cys-1776, Cys-1790/Cys-1840, Cys-1799/Cys-1823, Cys-1815/Cys-1836, Cys-1849/Cys-1899, Cys-1858/Cys-1882, and Cys-1874/Cys-1895. 5 consecutive BPTI/Kunitz inhibitor domains span residues Cys-1612–Cys-1662, Cys-1671–Cys-1721, Cys-1730–Cys-1780, Cys-1790–Cys-1840, and Cys-1849–Cys-1899. Asn-1750 is a glycosylation site (N-linked (GlcNAc...) asparagine). Residues Lys-1902–Pro-1928 are disordered. Low complexity predominate over residues Pro-1905–Pro-1916. Disulfide bonds link Cys-1922/Cys-1972, Cys-1931/Cys-1955, and Cys-1947/Cys-1968. The BPTI/Kunitz inhibitor 6 domain occupies Cys-1922–Cys-1972. The interval Cys-1972–Pro-2004 is disordered. Pro residues predominate over residues Pro-1977–Ala-1995. 18 disulfide bridges follow: Cys-2001–Cys-2051, Cys-2010–Cys-2034, Cys-2026–Cys-2047, Cys-2071–Cys-2121, Cys-2080–Cys-2104, Cys-2096–Cys-2117, Cys-2128–Cys-2178, Cys-2137–Cys-2161, Cys-2153–Cys-2174, Cys-2194–Cys-2244, Cys-2203–Cys-2227, Cys-2219–Cys-2240, Cys-2253–Cys-2303, Cys-2262–Cys-2286, Cys-2278–Cys-2299, Cys-2318–Cys-2371, Cys-2327–Cys-2354, and Cys-2346–Cys-2367. BPTI/Kunitz inhibitor domains are found at residues Cys-2001 to Cys-2051, Cys-2071 to Cys-2121, Cys-2128 to Cys-2178, Cys-2194 to Cys-2244, Cys-2253 to Cys-2303, and Cys-2318 to Cys-2371. The N-linked (GlcNAc...) asparagine glycan is linked to Asn-2020. Asn-2083 carries an N-linked (GlcNAc...) asparagine glycan. N-linked (GlcNAc...) asparagine glycosylation occurs at Asn-2205. Positions Asp-2452 to Ala-2498 constitute a WAP domain. N-linked (GlcNAc...) asparagine glycans are attached at residues Asn-2465, Asn-2552, and Asn-2625. 3 consecutive Ig-like C2-type domains span residues Pro-2523–Ala-2607, Pro-2617–Ser-2697, and Pro-2749–Ser-2840. Residues Cys-2543 and Cys-2592 are joined by a disulfide bond. Intrachain disulfides connect Cys-2640-Cys-2687 and Cys-2775-Cys-2824. N-linked (GlcNAc...) asparagine glycosylation is found at Asn-2784 and Asn-2838. A PLAC domain is found at Val-2847–Gly-2886.

Belongs to the papilin family. Homooligomer; disulfide-linked. N-glycosylated. In terms of processing, sulfated. As to expression, during embryogenesis it first appears in the extracellular matrix during gastrulation and early mesoderm development at sites where basement membranes do not subsequently form. Later, migrating hemocytes prominently produce it together with other ECM components, in basement membranes that underlie epithelia and envelop muscles and emerging organs. At various life stages, it can be synthesized by other cells, such as those of the fat body, and it also occurs in a few, circumscribed regions of relatively amorphous ECM. Isoform E is specifically expressed in ECM of heart and proventriculus. Isoform C is a major component of transitory ECM deposit in the early embryo. Isoform F is a major component of the basement membrane during embryogenesis.

The protein resides in the secreted. It localises to the extracellular space. The protein localises to the extracellular matrix. Its subcellular location is the basement membrane. Functionally, essential extracellular matrix (ECM) protein that influences cell rearrangements. May act by modulating metalloproteinases action during organogenesis. Able to non-competitively inhibit procollagen N-proteinase, an ADAMTS metalloproteinase. The protein is Papilin (Ppn) of Drosophila melanogaster (Fruit fly).